Here is a 117-residue protein sequence, read N- to C-terminus: Large ribosomal subunit protein uL18 (117 aa).

Belongs to the universal ribosomal protein uL18 family. Part of the 50S ribosomal subunit; part of the 5S rRNA/L5/L18/L25 subcomplex. Contacts the 5S and 23S rRNAs.

In terms of biological role, this is one of the proteins that bind and probably mediate the attachment of the 5S RNA into the large ribosomal subunit, where it forms part of the central protuberance. The chain is Large ribosomal subunit protein uL18 from Francisella philomiragia subsp. philomiragia (strain ATCC 25017 / CCUG 19701 / FSC 153 / O#319-036).